The sequence spans 249 residues: Nicotinamide/nicotinic acid mononucleotide adenylyltransferase (249 aa).

NAD(+) contacts are provided by Ser34 and Phe35. 2 residues coordinate ATP: His42 and Lys75. NAD(+) is bound by residues Thr112, Gly141, Asp143, Trp154, Arg173, and Asn204. Ser209–Arg210 contacts ATP.

This sequence belongs to the eukaryotic NMN adenylyltransferase family. A divalent metal cation is required as a cofactor.

The enzyme catalyses beta-nicotinamide D-ribonucleotide + ATP + H(+) = diphosphate + NAD(+). It catalyses the reaction nicotinate beta-D-ribonucleotide + ATP + H(+) = deamido-NAD(+) + diphosphate. It functions in the pathway cofactor biosynthesis; NAD(+) biosynthesis; deamido-NAD(+) from nicotinate D-ribonucleotide: step 1/1. Its pathway is cofactor biosynthesis; NAD(+) biosynthesis; NAD(+) from nicotinamide D-ribonucleotide: step 1/1. In terms of biological role, catalyzes the formation of NAD(+) from nicotinamide mononucleotide (NMN) and ATP. Can also use the deamidated form; nicotinic acid mononucleotide (NaMN) as substrate. This chain is Nicotinamide/nicotinic acid mononucleotide adenylyltransferase, found in Oryza sativa subsp. japonica (Rice).